A 302-amino-acid chain; its full sequence is Alpha-N-acetyl-neuraminyl-2,3-beta-galactosyl-1,3-N-acetyl-galactosaminide alpha-2,6-sialyltransferase (302 aa).

The Cytoplasmic segment spans residues 1–6; sequence MKAPGR. Residues 7 to 27 traverse the membrane as a helical; Signal-anchor for type II membrane protein segment; that stretch reads LVLIILCSVVFSAVYILLCCW. Residues 28 to 302 lie on the Lumenal side of the membrane; the sequence is AGLPLCLATC…VFAHPSWRTE (275 aa). A disulfide bridge links C76 with C225. N-linked (GlcNAc...) asparagine glycosylation is present at N135.

The protein belongs to the glycosyltransferase 29 family. As to expression, ubiquitous.

It localises to the golgi apparatus membrane. The catalysed reaction is an alpha-Neu5Ac-(2-&gt;3)-beta-D-Gal-(1-&gt;3)-D-GlcNAc derivative + CMP-N-acetyl-beta-neuraminate = an alpha-Neu5Ac-(2-&gt;3)-beta-D-Gal-(1-&gt;3)-[alpha-Neu5Ac-(2-&gt;6)]-D-GlcNAc derivative + CMP + H(+). The enzyme catalyses N-acetyl-alpha-neuraminosyl-(2-&gt;3)-beta-D-galactosyl-(1-&gt;3)-N-acetyl-D-galactosamine + CMP-N-acetyl-beta-neuraminate = N-acetyl-alpha-neuraminosyl-(2-&gt;3)-beta-D-galactosyl-(1-&gt;3)-[N-acetyl-alpha-neuraminosyl-(2-&gt;6)]-N-acetyl-D-galactosamine + CMP + H(+). It catalyses the reaction a ganglioside GM1b (d18:1(4E)) + CMP-N-acetyl-beta-neuraminate = a ganglioside GD1alpha (d18:1(4E)) + CMP + H(+). It carries out the reaction 3-O-[alpha-Neu5Ac-(2-&gt;3)-beta-D-Gal-(1-&gt;3)-alpha-D-GalNAc]-L-Ser-[protein] + CMP-N-acetyl-beta-neuraminate = a 3-O-{alpha-Neu5Ac-(2-&gt;3)-beta-D-Gal-(1-&gt;3)-[alpha-Neu5Ac-(2-&gt;6)]-alpha-D-GalNAc}-L-seryl-[protein] + CMP + H(+). The catalysed reaction is 3-O-[alpha-Neu5Ac-(2-&gt;3)-beta-D-Gal-(1-&gt;3)-alpha-D-GalNAc]-L-Thr-[protein] + CMP-N-acetyl-beta-neuraminate = a 3-O-{alpha-Neu5Ac-(2-&gt;3)-beta-D-Gal-(1-&gt;3)-[alpha-Neu5Ac-(2-&gt;6)]-alpha-D-GalNAc}-L-threonyl-[protein] + CMP + H(+). Its pathway is protein modification; protein glycosylation. It participates in glycolipid biosynthesis. Functionally, transfers the sialyl group (N-acetyl-alpha-neuraminyl or NeuAc) from CMP-NeuAc to the GalNAc residue on the NeuAc-alpha-2,3-Gal-beta-1,3-GalNAc sequence of glycoproteins and glycolipids forming an alpha-2,6-linkage. Produces branched type disialyl structures by transfer of a sialyl group onto a GalNAc residue inside the backbone core chains. Prefers O-glycans to glycoproteins or glycolipids. The sequence is that of Alpha-N-acetyl-neuraminyl-2,3-beta-galactosyl-1,3-N-acetyl-galactosaminide alpha-2,6-sialyltransferase (ST6GALNAC4) from Homo sapiens (Human).